A 450-amino-acid chain; its full sequence is Sulfite exporter TauE/SafE family protein 1 (450 aa).

12 helical membrane-spanning segments follow: residues 5–25, 48–68, 70–90, 97–117, 130–150, 153–173, 223–243, 261–281, 316–336, 340–360, 378–398, and 408–428; these read LVPL…SALA, TIEV…AASI, SAGG…IAGL, SFSA…NLFL, FDLA…GVIC, MFPN…STMK, FPWM…SINL, ALYW…TLCI, VMAL…GMLI, LLQI…MVLF, GTAA…LMVV, and ASII…LMTT.

This sequence belongs to the 4-toluene sulfonate uptake permease (TSUP) (TC 2.A.102) family.

The protein resides in the membrane. This Arabidopsis thaliana (Mouse-ear cress) protein is Sulfite exporter TauE/SafE family protein 1.